A 608-amino-acid polypeptide reads, in one-letter code: MSDTIEFDSKAFLKDLTNQPGVYRMYNHKQDVIYVGKAKNLKNRVSSYFRSQVDSIKTQSLVKQIAHMDVTVVHSEAEAFILENNFIKKYKPRYNVLLRDDKSYPFIFLSDHQHPRLANHRGPKKRKGEYFGPYPSAWAVRESLRTMQRIFPIRQCEDSYYRARSRPCLQYQLQRCAGPCVEGLVSDEDYQAQVDLARMFLKGKNKQVIDSLVQHMERASTDLRFEAAARYRDQISALNKVQEQQWVSGNQEEMDVFGFAYRNGIASIQGLFIRDNKLLGSKSFYPKVPAEATDEEVFQSFILQFYLAGNKVIPKQIVTPLELNEQGAIEELLTKEAGRRIQFYRGARDEKRRYLDLANTNAENALIAKQGQQKSVFARYTELEKILEFEQPIQRMECFDISHTSGQLTVASCVVFNREGPFKADYRRFNIEGITPGDDYAAMAQALARRYRDVKDDSKIPDILFIDGGKGQLTQAEDYFEDWKHEKKPLLIGVAKGSSRKAGLETLILAGNHATIPLSGDSIALHLIQHIRDESHRFAITGHRARRQKDKKTSKLESIPGVGAKRRQSLLKYMGGLQGILQASRSEIANVPGISAELADTIYDHIHN.

The region spanning 18 to 96 (NQPGVYRMYN…IKKYKPRYNV (79 aa)) is the GIY-YIG domain. Residues 206-241 (KQVIDSLVQHMERASTDLRFEAAARYRDQISALNKV) form the UVR domain.

This sequence belongs to the UvrC family. As to quaternary structure, interacts with UvrB in an incision complex.

It is found in the cytoplasm. Functionally, the UvrABC repair system catalyzes the recognition and processing of DNA lesions. UvrC both incises the 5' and 3' sides of the lesion. The N-terminal half is responsible for the 3' incision and the C-terminal half is responsible for the 5' incision. The protein is UvrABC system protein C of Pseudoalteromonas atlantica (strain T6c / ATCC BAA-1087).